A 232-amino-acid chain; its full sequence is Enolase-phosphatase E1 (232 aa).

It belongs to the HAD-like hydrolase superfamily. MasA/MtnC family. As to quaternary structure, monomer. Mg(2+) serves as cofactor.

The enzyme catalyses 5-methylsulfanyl-2,3-dioxopentyl phosphate + H2O = 1,2-dihydroxy-5-(methylsulfanyl)pent-1-en-3-one + phosphate. Its pathway is amino-acid biosynthesis; L-methionine biosynthesis via salvage pathway; L-methionine from S-methyl-5-thio-alpha-D-ribose 1-phosphate: step 3/6. The protein operates within amino-acid biosynthesis; L-methionine biosynthesis via salvage pathway; L-methionine from S-methyl-5-thio-alpha-D-ribose 1-phosphate: step 4/6. In terms of biological role, bifunctional enzyme that catalyzes the enolization of 2,3-diketo-5-methylthiopentyl-1-phosphate (DK-MTP-1-P) into the intermediate 2-hydroxy-3-keto-5-methylthiopentenyl-1-phosphate (HK-MTPenyl-1-P), which is then dephosphorylated to form the acireductone 1,2-dihydroxy-3-keto-5-methylthiopentene (DHK-MTPene). The chain is Enolase-phosphatase E1 from Sorangium cellulosum (strain So ce56) (Polyangium cellulosum (strain So ce56)).